The chain runs to 469 residues: Zinc transporter SLC39A7 (469 aa).

A helical membrane pass occupies residues 5–25 (LGAPHWVAVGLLTWAALGLLV). 2 stretches are compositionally biased toward basic and acidic residues: residues 43–56 (HGHS…DFHH) and 66–114 (HTHE…EHSH). A disordered region spans residues 43–122 (HGHSHRRSHE…SHGGYGESGA (80 aa)). At His66 the chain carries Pros-methylhistidine. Transmembrane regions (helical) follow at residues 138 to 158 (ALGA…LIPV), 169 to 189 (LQIL…LHLI), and 214 to 234 (GPIL…LVVE). Residues 242–255 (GGHGHSHGHGHTHG) are compositionally biased toward basic residues. Residues 242-313 (GGHGHSHGHG…QNSEEEKTGS (72 aa)) form a disordered region. Residues 256 to 266 (HTQGSHGHGTQ) are compositionally biased toward low complexity. A phosphoserine mark is found at Ser275 and Ser276. Positions 295–313 (RLKDGPLRPQNSEEEKTGS) are enriched in basic and acidic residues. The next 3 helical transmembrane spans lie at 386–406 (LTAI…GGAV), 417–437 (GWVL…SVLP), and 448–468 (SLLE…IAHL).

The protein belongs to the ZIP transporter (TC 2.A.5) family. KE4/Catsup subfamily. As to quaternary structure, homodimer. In terms of processing, methylation at some His residue by METTL9 leads to reduced zinc-binding. Rapidly phosphorylated by CK2 following Zn(2+) treatment. This phosphorylation is required for efficient cytosolic Zn(2+) release.

It localises to the endoplasmic reticulum membrane. The protein resides in the golgi apparatus. Its subcellular location is the cis-Golgi network membrane. The catalysed reaction is Zn(2+)(in) = Zn(2+)(out). Functionally, transports Zn(2+) from the endoplasmic reticulum (ER)/Golgi apparatus to the cytosol, playing an essential role in the regulation of cytosolic zinc levels. Acts as a gatekeeper of zinc release from intracellular stores, requiring post-translational activation by phosphorylation, resulting in activation of multiple downstream pathways leading to cell growth and proliferation. Has an essential role in B cell development and is required for proper B cell receptor signaling. Plays an important role in maintaining intestinal epithelial homeostasis and skin dermis development by regulating ER function. Controls cell signaling pathways involved in glucose metabolism in skeletal muscle. Has a protective role against ER stress in different biological contexts. Mediates Zn(2+)-induced ferroptosis. The chain is Zinc transporter SLC39A7 from Canis lupus familiaris (Dog).